A 326-amino-acid chain; its full sequence is tRNA uridine(34) hydroxylase (326 aa).

One can recognise a Rhodanese domain in the interval 123-217 (SDPDVLLVDT…YLEEVPEENS (95 aa)). Cys177 serves as the catalytic Cysteine persulfide intermediate. Residues 276–320 (EEQKSRFREREKQVQLANERGETHVGGDAAKLIEQRKQEKKEKKQ) show a composition bias toward basic and acidic residues. Residues 276-326 (EEQKSRFREREKQVQLANERGETHVGGDAAKLIEQRKQEKKEKKQQQRSSK) form a disordered region.

This sequence belongs to the TrhO family.

The enzyme catalyses uridine(34) in tRNA + AH2 + O2 = 5-hydroxyuridine(34) in tRNA + A + H2O. Catalyzes oxygen-dependent 5-hydroxyuridine (ho5U) modification at position 34 in tRNAs. The polypeptide is tRNA uridine(34) hydroxylase (Aliivibrio salmonicida (strain LFI1238) (Vibrio salmonicida (strain LFI1238))).